We begin with the raw amino-acid sequence, 477 residues long: uncharacterized protein (477 aa).

The N-terminal stretch at 1–18 (MWTALVLVWISSVPLSRS) is a signal peptide. The Extracellular portion of the chain corresponds to 19 to 427 (HTVPAVPRHL…DPLTPSLVNK (409 aa)). N-linked (GlcNAc...) asparagine glycans are attached at residues N40, N51, and N77. Disordered regions lie at residues 79–103 (TRVT…GTAD), 239–366 (GTIN…TGGP), and 378–398 (KATA…DVKV). Residues 85-97 (TTPHGTNTSTPTT) show a composition bias toward low complexity. Composition is skewed to polar residues over residues 253–288 (PAKS…QPVH) and 298–309 (PSNTTLEPNTPK). An N-linked (GlcNAc...) asparagine glycan is attached at N300. 3 stretches are compositionally biased toward low complexity: residues 310-326 (SVAS…QVQT), 348-361 (TSPT…LPTQ), and 378-393 (KATA…SRSS). Residues 428-448 (MFLLVVLIVGVTLFIAVLMMF) form a helical membrane-spanning segment. Over 449–477 (ALQAYESYKKKDYTQVDYLINGMYADSEM) the chain is Cytoplasmic.

The protein resides in the cell membrane. Its subcellular location is the golgi apparatus. It localises to the trans-Golgi network membrane. This is an uncharacterized protein from Rattus norvegicus (Rat).